A 232-amino-acid polypeptide reads, in one-letter code: tRNA (guanine-N(1)-)-methyltransferase (232 aa).

S-adenosyl-L-methionine-binding positions include glycine 111 and 131 to 136 (IGDYIL).

It belongs to the RNA methyltransferase TrmD family. In terms of assembly, homodimer.

The protein resides in the cytoplasm. It carries out the reaction guanosine(37) in tRNA + S-adenosyl-L-methionine = N(1)-methylguanosine(37) in tRNA + S-adenosyl-L-homocysteine + H(+). Specifically methylates guanosine-37 in various tRNAs. This Bartonella henselae (strain ATCC 49882 / DSM 28221 / CCUG 30454 / Houston 1) (Rochalimaea henselae) protein is tRNA (guanine-N(1)-)-methyltransferase.